The chain runs to 397 residues: NADH-quinone oxidoreductase subunit H (397 aa).

9 consecutive transmembrane segments (helical) span residues 7–27, 78–98, 120–140, 164–184, 195–215, 247–267, 283–303, 322–342, and 353–373; these read ALLI…TAFA, LVYT…FGGI, ILAL…GGWA, MGLS…LDIV, WLIL…FAEV, MAEY…FFGG, SWPL…FIWV, LTLP…AFVP, and WLLG…SDAV.

Belongs to the complex I subunit 1 family. In terms of assembly, NDH-1 is composed of 15 different subunits. Subunits NuoA, H, J, K, L, M, N constitute the membrane sector of the complex.

It localises to the cell membrane. The enzyme catalyses a quinone + NADH + 5 H(+)(in) = a quinol + NAD(+) + 4 H(+)(out). Its function is as follows. NDH-1 shuttles electrons from NADH, via FMN and iron-sulfur (Fe-S) centers, to quinones in the respiratory chain. The immediate electron acceptor for the enzyme in this species is believed to be ubiquinone. Couples the redox reaction to proton translocation (for every two electrons transferred, four hydrogen ions are translocated across the cytoplasmic membrane), and thus conserves the redox energy in a proton gradient. This subunit may bind ubiquinone. This chain is NADH-quinone oxidoreductase subunit H, found in Deinococcus radiodurans (strain ATCC 13939 / DSM 20539 / JCM 16871 / CCUG 27074 / LMG 4051 / NBRC 15346 / NCIMB 9279 / VKM B-1422 / R1).